A 125-amino-acid chain; its full sequence is Aldolase FrzH (125 aa).

It carries out the reaction (2S)-3-(4-methoxyphenyl)-2-[(3S)-3-(methylamino)-8-oxo-1-azaspiro[4.5]decan-1-yl]propanal = (1S,3S,6S,7S,8R)-7-hydroxy-6-[(4-methoxyphenyl)methyl]-3-(methylamino)-5-azatricyclo[6.3.1.0(1,5)]dodecan-9-one. Its pathway is secondary metabolite biosynthesis. In terms of biological role, aldolase; part of the gene cluster that mediates the biosynthesis of the alkaloid (-)-FR901483, a potent immunosuppressant that shows efficacy in animal models and a probable inhibitor of purine nucleotide biosynthesis by targeting phosphoribosylpyrophosphate amidotransferase (PPAT). Within the pathway, FrzH is a new kind of aldolase with no similarities to known aldolases, and which catalyzes the intramolecular aldol condensation via formation of a C9-C3' bond to yield an aza-tricyclic product. The biosynthesis of (-)-FR901483 starts with the condensation of two L-tyrosines to yield (S,S)-dityrosyl-piperazine. This process occurs in 3 steps with the non-canonical nonribosomal peptide synthetase FrzA catalyzing the reduction of L-tyrosine into L-tyrosinal, the spontaneous condensation of 2 L-tyrosinal units, and the subsequent reduction by the NmrA-like family domain-containing oxidoreductase FrzB. The cytochrome P450 monooxygenase FrzC then performs coupling between N10 and C1' to morph the piperazine into a 1,4-diazabicyclo[3.2.1]octane spiro-fused to a 2,5-cyclohexadienone. The dienone portion is further reduced to cyclohexanone by the flavin-dependent reductase FrzD. The methyltranserases (MTs) FrzE and FrzF are then involved in the methylation at the C10' amine and the C4 phenolic oxygen, respectively. The order of the two MTs appear to be interchangeable. Cleavage of the C9-N10' bond by the dioxygenase FrzG then leads to formation of a conjugated iminium. In addition to the oxidation of C9, an additional dehydrogenation between C7 and C8 can occur to give a likely shunt product. The next biosynthetic step is the intramolecular aldol condensation catalyzed by the newly identified aldolase FrzH to yield an aza-tricyclic product with the formation of a C9-C3' bond. The short-chain dehydrogenase/reductase FrzI then produces dephospho-(-)-FR901483 that is phosphorylated at C4'-OH into (-)-FR901483 by the phosphotransferase FrzJ. The protein is Aldolase FrzH of Cladobotryum sp.